A 165-amino-acid chain; its full sequence is Large ribosomal subunit protein uL10 (165 aa).

Belongs to the universal ribosomal protein uL10 family. In terms of assembly, part of the ribosomal stalk of the 50S ribosomal subunit. The N-terminus interacts with L11 and the large rRNA to form the base of the stalk. The C-terminus forms an elongated spine to which L12 dimers bind in a sequential fashion forming a multimeric L10(L12)X complex.

Forms part of the ribosomal stalk, playing a central role in the interaction of the ribosome with GTP-bound translation factors. The sequence is that of Large ribosomal subunit protein uL10 from Mycoplasma capricolum subsp. capricolum (strain California kid / ATCC 27343 / NCTC 10154).